Here is a 686-residue protein sequence, read N- to C-terminus: Chondroitin synthase (686 aa).

The segment at 130–417 is galactosaminyltransferase; A1 domain; that stretch reads YVWAGKRKEL…LLQQKVPYFY (288 aa). UDP-N-acetyl-alpha-D-galactosamine contacts are provided by residues Pro-157, Arg-161, Asp-188, Tyr-217, Arg-223, and 239–240; that span reads DC. Asp-241 contributes to the Mn(2+) binding site. 361-362 provides a ligand contact to UDP-N-acetyl-alpha-D-galactosamine; sequence ED. His-386 provides a ligand contact to Mn(2+). Positions 418 to 682 are glucuronosyltransferase; A2 domain; it reads RKKEKIESAT…ECRKYTWEKI (265 aa). Residues Tyr-441, Asp-469, and 517 to 520 contribute to the UDP-alpha-D-glucuronate site; that span reads QLDS. Position 521 (Asp-521) interacts with Mn(2+). UDP-alpha-D-glucuronate is bound by residues His-581 and 603–604; that span reads AV. His-631 contacts Mn(2+).

It belongs to the glycosyltransferase 2 family. CS/HAS subfamily. Mn(2+) is required as a cofactor.

The enzyme catalyses 3-O-(beta-D-GlcA-(1-&gt;3)-beta-D-GalNAc-(1-&gt;4)-beta-D-GlcA-(1-&gt;3)-beta-D-Gal-(1-&gt;3)-beta-D-Gal-(1-&gt;4)-beta-D-Xyl)-L-seryl-[protein] + UDP-N-acetyl-alpha-D-galactosamine = 3-O-(beta-D-GalNAc-(1-&gt;4)-beta-D-GlcA-(1-&gt;3)-beta-D-GalNAc-(1-&gt;4)-beta-D-GlcA-(1-&gt;3)-beta-D-Gal-(1-&gt;3)-beta-D-Gal-(1-&gt;4)-beta-D-Xyl)-L-seryl-[protein] + UDP + H(+). The catalysed reaction is 3-O-{beta-D-GlcA-(1-&gt;3)-[beta-D-GalNAc-(1-&gt;4)-beta-D-GlcA-(1-&gt;3)](n)-beta-D-GalNAc-(1-&gt;4)-beta-D-GlcA-(1-&gt;3)-beta-D-Gal-(1-&gt;3)-beta-D-Gal-(1-&gt;4)-beta-D-Xyl}-L-seryl-[protein] + UDP-N-acetyl-alpha-D-galactosamine = 3-O-{[beta-D-GalNAc-(1-&gt;4)-beta-D-GlcA-(1-&gt;3)](n+1)-beta-D-GalNAc-(1-&gt;4)-beta-D-GlcA-(1-&gt;3)-beta-D-Gal-(1-&gt;3)-beta-D-Gal-(1-&gt;4)-beta-D-Xyl}-L-seryl-[protein] + UDP + H(+). It carries out the reaction 3-O-(beta-D-GalNAc-(1-&gt;4)-beta-D-GlcA-(1-&gt;3)-beta-D-Gal-(1-&gt;3)-beta-D-Gal-(1-&gt;4)-beta-D-Xyl)-L-seryl-[protein] + UDP-alpha-D-glucuronate = 3-O-(beta-D-GlcA-(1-&gt;3)-beta-D-GalNAc-(1-&gt;4)-beta-D-GlcA-(1-&gt;3)-beta-D-Gal-(1-&gt;3)-beta-D-Gal-(1-&gt;4)-beta-D-Xyl)-L-seryl-[protein] + UDP + H(+). It catalyses the reaction 3-O-{[beta-D-GalNAc-(1-&gt;4)-beta-D-GlcA-(1-&gt;3)](n)-beta-D-GalNAc-(1-&gt;4)-beta-D-GlcA-(1-&gt;3)-beta-D-Gal-(1-&gt;3)-beta-D-Gal-(1-&gt;4)-beta-D-Xyl}-L-seryl-[protein] + UDP-alpha-D-glucuronate = 3-O-{beta-D-GlcA-(1-&gt;3)-[beta-D-GalNAc-(1-&gt;4)-beta-D-GlcA-(1-&gt;3)](n)-beta-D-GalNAc-(1-&gt;4)-beta-D-GlcA-(1-&gt;3)-beta-D-Gal-(1-&gt;3)-beta-D-Gal-(1-&gt;4)-beta-D-Xyl}-L-seryl-[protein] + UDP + H(+). Functionally, glycosyltransferase that catalyzes elongation of chondroitin, a polysaccharide composed of a repeating disaccharide of N-acetylgalactosamine (GalNAc) and glucuronic acid (GlcUA) units, by alternatively transferring the GlcUA and GalNAc moiety from UDP-GlcUA and UDP-GalNAc to the non-reducing ends of the chondroitin chain. Each chondroitin unit has the composition beta-(1-&gt;4)-GlcUA-beta-(1-&gt;3)-GalNAc. This is Chondroitin synthase (kfoC) from Escherichia coli.